The chain runs to 151 residues: UPF0208 membrane protein YfbV (151 aa).

The next 2 helical transmembrane spans lie at 46-65 and 69-91; these read YAIR…QIAL and LGPA…WWLG.

It belongs to the UPF0208 family.

The protein localises to the cell inner membrane. The sequence is that of UPF0208 membrane protein YfbV from Shigella boydii serotype 18 (strain CDC 3083-94 / BS512).